The sequence spans 309 residues: Aspartate carbamoyltransferase catalytic subunit (309 aa).

Carbamoyl phosphate contacts are provided by R57 and T58. K86 is a binding site for L-aspartate. Carbamoyl phosphate is bound by residues R107, H135, and Q138. Residues R168 and R228 each contribute to the L-aspartate site. Carbamoyl phosphate contacts are provided by L267 and P268.

Belongs to the aspartate/ornithine carbamoyltransferase superfamily. ATCase family. Heterooligomer of catalytic and regulatory chains.

The catalysed reaction is carbamoyl phosphate + L-aspartate = N-carbamoyl-L-aspartate + phosphate + H(+). Its pathway is pyrimidine metabolism; UMP biosynthesis via de novo pathway; (S)-dihydroorotate from bicarbonate: step 2/3. Catalyzes the condensation of carbamoyl phosphate and aspartate to form carbamoyl aspartate and inorganic phosphate, the committed step in the de novo pyrimidine nucleotide biosynthesis pathway. The protein is Aspartate carbamoyltransferase catalytic subunit of Cenarchaeum symbiosum (strain A).